We begin with the raw amino-acid sequence, 736 residues long: Probable methionine--tRNA ligase, cytoplasmic (736 aa).

A 'HIGH' region motif is present at residues 25–35 (PYVNNVPHLGN). A 'KMSKS' region motif is present at residues 346–350 (KFSKS). K349 is an ATP binding site. A tRNA-binding domain is found at 573 to 680 (PEFPIDMKIA…QSIEAGSKIA (108 aa)).

This sequence belongs to the class-I aminoacyl-tRNA synthetase family.

It localises to the cytoplasm. It catalyses the reaction tRNA(Met) + L-methionine + ATP = L-methionyl-tRNA(Met) + AMP + diphosphate. The sequence is that of Probable methionine--tRNA ligase, cytoplasmic (metS) from Dictyostelium discoideum (Social amoeba).